The sequence spans 540 residues: Cytochrome P450 monooxygenase prx8 (540 aa).

Residues 50 to 68 (ALGAAIALFACACAYALVA) traverse the membrane as a helical segment. Asparagine 460 is a glycosylation site (N-linked (GlcNAc...) asparagine). Cysteine 483 lines the heme pocket.

The protein belongs to the cytochrome P450 family. Requires heme as cofactor.

The protein resides in the membrane. It participates in sesquiterpene biosynthesis. Its function is as follows. Cytochrome P450 monooxygenase; part of the gene cluster that mediates the biosynthesis of PR-toxin, a bicyclic sesquiterpene belonging to the eremophilane class and acting as a mycotoxin. The first step of the pathway is catalyzed by the aristolochene synthase which performs the cyclization of trans,trans-farnesyl diphosphate (FPP) to the bicyclic sesquiterpene aristolochene. Following the formation of aristolochene, the non-oxygenated aristolochene is converted to the trioxygenated intermediate eremofortin B, via 7-epi-neopetasone. This conversion appears to involve three enzymes, a hydroxysterol oxidase-like enzyme, the quinone-oxidase prx3 that forms the quinone-type-structure in the bicyclic nucleus of aristolochene with the C8-oxo group and the C-3 hydroxyl group, and the P450 monooxygenase prx9 that introduces the epoxide at the double bond between carbons 1 and 2. No monoxy or dioxy-intermediates have been reported to be released to the broth, so these three early oxidative reactions may be coupled together. Eremofortin B is further oxidized by another P450 monooxygenase, that introduces a second epoxide between carbons 7 and 11 prior to acetylation to eremofortin A by the acetyltransferase prx11. The second epoxidation may be performed by a second P450 monooxygenase. After the acetylation step, eremofortin A is converted to eremofortin C and then to PR-toxin. First the conversion of eremofortin A to eremofortin C proceeds by oxidation of the side chain of the molecule at C-12 and is catalyzed by the short-chain oxidoreductase prx1. The cytochrome P450 monooxygenase prx8 also plays a role in this step. The primary alcohol formed at C-12 is finally oxidized by the short-chain alcohol dehydrogenase prx4 that forms PR-toxin. The protein is Cytochrome P450 monooxygenase prx8 of Penicillium rubens (strain ATCC 28089 / DSM 1075 / NRRL 1951 / Wisconsin 54-1255) (Penicillium chrysogenum).